Reading from the N-terminus, the 116-residue chain is T cell receptor alpha variable 38-1 (116 aa).

The N-terminal stretch at 1 to 21 (MTRVSLLWAVVVSTCLESGMA) is a signal peptide. An Ig-like domain is found at 22 to 116 (QTVTQSQPEM…TAMYFCAFMK (95 aa)). A disulfide bond links Cys-43 and Cys-112. Asn-78 carries N-linked (GlcNAc...) asparagine glycosylation.

In terms of assembly, alpha-beta TR is a heterodimer composed of an alpha and beta chain; disulfide-linked. The alpha-beta TR is associated with the transmembrane signaling CD3 coreceptor proteins to form the TR-CD3 (TcR or TCR). The assembly of alpha-beta TR heterodimers with CD3 occurs in the endoplasmic reticulum where a single alpha-beta TR heterodimer associates with one CD3D-CD3E heterodimer, one CD3G-CD3E heterodimer and one CD247 homodimer forming a stable octameric structure. CD3D-CD3E and CD3G-CD3E heterodimers preferentially associate with TR alpha and TR beta chains, respectively. The association of the CD247 homodimer is the last step of TcR assembly in the endoplasmic reticulum and is required for transport to the cell surface.

Its subcellular location is the cell membrane. V region of the variable domain of T cell receptor (TR) alpha chain that participates in the antigen recognition. Alpha-beta T cell receptors are antigen specific receptors which are essential to the immune response and are present on the cell surface of T lymphocytes. Recognize peptide-major histocompatibility (MH) (pMH) complexes that are displayed by antigen presenting cells (APC), a prerequisite for efficient T cell adaptive immunity against pathogens. Binding of alpha-beta TR to pMH complex initiates TR-CD3 clustering on the cell surface and intracellular activation of LCK that phosphorylates the ITAM motifs of CD3G, CD3D, CD3E and CD247 enabling the recruitment of ZAP70. In turn ZAP70 phosphorylates LAT, which recruits numerous signaling molecules to form the LAT signalosome. The LAT signalosome propagates signal branching to three major signaling pathways, the calcium, the mitogen-activated protein kinase (MAPK) kinase and the nuclear factor NF-kappa-B (NF-kB) pathways, leading to the mobilization of transcription factors that are critical for gene expression and essential for T cell growth and differentiation. The T cell repertoire is generated in the thymus, by V-(D)-J rearrangement. This repertoire is then shaped by intrathymic selection events to generate a peripheral T cell pool of self-MH restricted, non-autoaggressive T cells. Post-thymic interaction of alpha-beta TR with the pMH complexes shapes TR structural and functional avidity. The chain is T cell receptor alpha variable 38-1 from Homo sapiens (Human).